Here is a 229-residue protein sequence, read N- to C-terminus: Ribose-5-phosphate isomerase A (229 aa).

Residues 28 to 31 (TGST), 85 to 88 (DGAD), and 98 to 101 (KGRG) contribute to the substrate site. Glu107 serves as the catalytic Proton acceptor. Lys125 is a substrate binding site.

Belongs to the ribose 5-phosphate isomerase family. As to quaternary structure, homotetramer.

The catalysed reaction is aldehydo-D-ribose 5-phosphate = D-ribulose 5-phosphate. It participates in carbohydrate degradation; pentose phosphate pathway; D-ribose 5-phosphate from D-ribulose 5-phosphate (non-oxidative stage): step 1/1. Its activity is regulated as follows. Inhibited by D-4-phosphoerythronic acid. In terms of biological role, involved in the first step of the non-oxidative branch of the pentose phosphate pathway. It catalyzes the reversible conversion of ribose-5-phosphate to ribulose 5-phosphate. The polypeptide is Ribose-5-phosphate isomerase A (Pyrococcus horikoshii (strain ATCC 700860 / DSM 12428 / JCM 9974 / NBRC 100139 / OT-3)).